Consider the following 429-residue polypeptide: Homocysteine synthase (429 aa).

Residue lysine 210 is modified to N6-(pyridoxal phosphate)lysine.

The protein belongs to the trans-sulfuration enzymes family. Homotetramer. It depends on pyridoxal 5'-phosphate as a cofactor.

Its subcellular location is the cytoplasm. It is found in the nucleus. The catalysed reaction is O-acetyl-L-homoserine + methanethiol = L-methionine + acetate + H(+). It carries out the reaction O-acetyl-L-homoserine + hydrogen sulfide = L-homocysteine + acetate. It functions in the pathway amino-acid biosynthesis; L-methionine biosynthesis via de novo pathway; L-homocysteine from O-acetyl-L-homoserine. In terms of biological role, catalyzes the conversion of O-acetyl-L-homoserine (OAH) into homocysteine in the methionine biosynthesis pathway. Can also use O-succinyl-L-homoserine and L-homoserine as substrates. Also has cysteine synthase (O-acetylserine sulfhydrylase) activity in vitro, but in S.pombe, it seems only to be involved in the alternative pathway of methionine biosynthesis under cysteine deficiency conditions. The sequence is that of Homocysteine synthase from Schizosaccharomyces pombe (strain 972 / ATCC 24843) (Fission yeast).